We begin with the raw amino-acid sequence, 293 residues long: Succinate--CoA ligase [ADP-forming] subunit alpha (293 aa).

Residues 21 to 24 (TGKQ), Lys47, and 99 to 101 (ITE) each bind CoA. Tyr162 provides a ligand contact to substrate. Catalysis depends on His249, which acts as the Tele-phosphohistidine intermediate.

The protein belongs to the succinate/malate CoA ligase alpha subunit family. Heterotetramer of two alpha and two beta subunits.

The catalysed reaction is succinate + ATP + CoA = succinyl-CoA + ADP + phosphate. It carries out the reaction GTP + succinate + CoA = succinyl-CoA + GDP + phosphate. It functions in the pathway carbohydrate metabolism; tricarboxylic acid cycle; succinate from succinyl-CoA (ligase route): step 1/1. Functionally, succinyl-CoA synthetase functions in the citric acid cycle (TCA), coupling the hydrolysis of succinyl-CoA to the synthesis of either ATP or GTP and thus represents the only step of substrate-level phosphorylation in the TCA. The alpha subunit of the enzyme binds the substrates coenzyme A and phosphate, while succinate binding and nucleotide specificity is provided by the beta subunit. The protein is Succinate--CoA ligase [ADP-forming] subunit alpha of Methanothermobacter thermautotrophicus (strain ATCC 29096 / DSM 1053 / JCM 10044 / NBRC 100330 / Delta H) (Methanobacterium thermoautotrophicum).